The chain runs to 275 residues: Mitochondrial outer membrane porin (275 aa).

The protein belongs to the eukaryotic mitochondrial porin (TC 1.B.8.1) family.

It is found in the mitochondrion outer membrane. Forms a channel through the cell membrane that allows diffusion of small hydrophilic molecules. The channel adopts an open conformation at low or zero membrane potential and a closed conformation at potentials above 30-40 mV. The open state has a weak anion selectivity whereas the closed state is cation-selective. The sequence is that of Mitochondrial outer membrane porin (VDAC1) from Triticum aestivum (Wheat).